The following is a 145-amino-acid chain: Mitochondrial import receptor subunit TOM20 homolog (145 aa).

Residues 1 to 6 are Mitochondrial intermembrane-facing; that stretch reads MVGRNS. Residues 7 to 24 form a helical membrane-spanning segment; that stretch reads AIAAGVCGALFIGYCIYF. Topologically, residues 25–145 are cytoplasmic; that stretch reads DRKRRSDPNF…AQSLAEDDVE (121 aa). Residues lysine 35, lysine 56, lysine 61, and lysine 68 each participate in a glycyl lysine isopeptide (Lys-Gly) (interchain with G-Cter in ubiquitin) cross-link. Residues serine 135 and serine 138 each carry the phosphoserine modification.

This sequence belongs to the Tom20 family. Forms part of the preprotein translocase complex of the outer mitochondrial membrane (TOM complex) which consists of at least 7 different proteins (TOMM5, TOMM6, TOMM7, TOMM20, TOMM22, TOMM40 and TOMM70). Interacts with TOM22. Interacts with APEX1. Interacts with TBC1D21. Upon mitochondrial depolarization, interacts with PINK1; the interaction is required for PINK1-TOM-TIM23 supercomplex formation which is critical for PINK1 stabilization at the outer mitochondrial membrane, kinase activation and downstream mitophagy. Post-translationally, ubiquitinated by PRKN during mitophagy, leading to its degradation and enhancement of mitophagy. Deubiquitinated by USP30.

Its subcellular location is the mitochondrion outer membrane. Its function is as follows. Central component of the receptor complex responsible for the recognition and translocation of cytosolically synthesized mitochondrial preproteins. Together with TOM22 functions as the transit peptide receptor at the surface of the mitochondrion outer membrane and facilitates the movement of preproteins into the TOM40 translocation pore. Required for the translocation across the mitochondrial outer membrane of cytochrome P450 monooxygenases. In Bos taurus (Bovine), this protein is Mitochondrial import receptor subunit TOM20 homolog (TOMM20).